The sequence spans 426 residues: Diaminobutyrate--2-oxoglutarate transaminase (426 aa).

N6-(pyridoxal phosphate)lysine is present on K272.

It belongs to the class-III pyridoxal-phosphate-dependent aminotransferase family. Pyridoxal 5'-phosphate is required as a cofactor.

The catalysed reaction is L-2,4-diaminobutanoate + 2-oxoglutarate = L-aspartate 4-semialdehyde + L-glutamate. The protein operates within amine and polyamine biosynthesis; ectoine biosynthesis; L-ectoine from L-aspartate 4-semialdehyde: step 1/3. Functionally, catalyzes reversively the conversion of L-aspartate beta-semialdehyde (ASA) to L-2,4-diaminobutyrate (DABA) by transamination with L-glutamate. The polypeptide is Diaminobutyrate--2-oxoglutarate transaminase (ectB) (Sporosarcina pasteurii (Bacillus pasteurii)).